Reading from the N-terminus, the 254-residue chain is Hydroxyacylglutathione hydrolase (254 aa).

The Zn(2+) site is built by histidine 54, histidine 56, aspartate 58, histidine 59, histidine 111, aspartate 130, and histidine 168.

Belongs to the metallo-beta-lactamase superfamily. Glyoxalase II family. In terms of assembly, monomer. Zn(2+) serves as cofactor.

The enzyme catalyses an S-(2-hydroxyacyl)glutathione + H2O = a 2-hydroxy carboxylate + glutathione + H(+). Its pathway is secondary metabolite metabolism; methylglyoxal degradation; (R)-lactate from methylglyoxal: step 2/2. Functionally, thiolesterase that catalyzes the hydrolysis of S-D-lactoyl-glutathione to form glutathione and D-lactic acid. The polypeptide is Hydroxyacylglutathione hydrolase (Legionella pneumophila (strain Corby)).